We begin with the raw amino-acid sequence, 68 residues long: Neuronal regeneration-related protein (68 aa).

This Gallus gallus (Chicken) protein is Neuronal regeneration-related protein (NREP).